Reading from the N-terminus, the 238-residue chain is Uridylate kinase (238 aa).

ATP is bound at residue 12-15 (KLSG). Residue Gly-54 coordinates UMP. ATP-binding residues include Gly-55 and Arg-59. UMP is bound by residues Asp-74 and 135 to 142 (TGNPFFTT). Residues Thr-162, Tyr-168, and Asp-171 each coordinate ATP.

Belongs to the UMP kinase family. In terms of assembly, homohexamer.

Its subcellular location is the cytoplasm. It carries out the reaction UMP + ATP = UDP + ADP. It functions in the pathway pyrimidine metabolism; CTP biosynthesis via de novo pathway; UDP from UMP (UMPK route): step 1/1. Its activity is regulated as follows. Inhibited by UTP. In terms of biological role, catalyzes the reversible phosphorylation of UMP to UDP. The protein is Uridylate kinase of Janthinobacterium sp. (strain Marseille) (Minibacterium massiliensis).